Reading from the N-terminus, the 432-residue chain is Probable D-serine dehydratase (432 aa).

N6-(pyridoxal phosphate)lysine is present on lysine 112.

Belongs to the serine/threonine dehydratase family. DsdA subfamily. Pyridoxal 5'-phosphate serves as cofactor.

It carries out the reaction D-serine = pyruvate + NH4(+). The protein is Probable D-serine dehydratase of Pediococcus pentosaceus (strain ATCC 25745 / CCUG 21536 / LMG 10740 / 183-1w).